Reading from the N-terminus, the 413-residue chain is Phosphatidylcholine-sterol acyltransferase (413 aa).

The signal sequence occupies residues 1-22 (GRTGAGFTLLTLLLLLPQPTSQ). Residues cysteine 72 and cysteine 96 are joined by a disulfide bond. Residue asparagine 106 is glycosylated (N-linked (GlcNAc...) asparagine). Catalysis depends on serine 203, which acts as the Charge relay system. The Nucleophile role is filled by serine 203. The N-linked (GlcNAc...) asparagine glycan is linked to asparagine 294. The cysteines at positions 335 and 378 are disulfide-linked. Catalysis depends on charge relay system residues aspartate 367 and histidine 399. Asparagine 406 carries an N-linked (GlcNAc...) asparagine glycan.

Belongs to the AB hydrolase superfamily. Lipase family. Detected in blood plasma (at protein level). Expressed in liver, brain and adrenal glands. Lower expression in testes. In laying hens, expressed higher in brain than in liver. In roosters, higher levels in liver than in brain.

Its subcellular location is the secreted. It carries out the reaction a sterol + a 1,2-diacyl-sn-glycero-3-phosphocholine = a sterol ester + a 1-acyl-sn-glycero-3-phosphocholine. With respect to regulation, APOA1 is the most potent activator in plasma. Also activated by APOE, APOC1 and APOA4. Central enzyme in the extracellular metabolism of plasma lipoproteins. Synthesized mainly in the liver and secreted into plasma where it converts cholesterol and phosphatidylcholines (lecithins) to cholesteryl esters and lysophosphatidylcholines on the surface of high and low density lipoproteins (HDLs and LDLs). The cholesterol ester is then transported back to the liver. Also produced in the brain by primary astrocytes, and esterifies free cholesterol on nascent APOE-containing lipoproteins secreted from glia and influences cerebral spinal fluid (CSF) APOE- and APOA1 levels. Together with APOE and the cholesterol transporter ABCA1, plays a key role in the maturation of glial-derived, nascent lipoproteins. Required for remodeling high-density lipoprotein particles into their spherical forms. Has a preference for plasma 16:0-18:2 or 18:O-18:2 phosphatidylcholines. This Gallus gallus (Chicken) protein is Phosphatidylcholine-sterol acyltransferase (LCAT).